Consider the following 288-residue polypeptide: MIIQGNQLDSLPKAEDWEAFAESYKRIAEVAVMKPVQALLQCLDDRLPLSGAVGILDNGSGPGIIMSSLIERYGPQLPPDCVLTCVDYAPAMIDQVDKARIKAVEEDADSAWGRVEGKVLDALDLHSIADESQSHIAAGLLYNLTTDPAKCLSECKRTLQPGGVLAVSAWEGNDWIEMLRVVPLIKPDLKTAIQPKWSTVDAVRWDLELAGFREVHVQRIPIKIPFTSHALFVDTLMRYQPRMVAMLRTFTEDEKTELRRLLMNEMKVICPSQPGMMSGAVMVGAGVR.

S-adenosyl-L-methionine contacts are provided by residues Asp87 and 121 to 122 (DA).

It belongs to the class I-like SAM-binding methyltransferase superfamily.

The protein operates within mycotoxin biosynthesis. Functionally, methyltransferase; part of the gene cluster that mediates the biosynthesis of UCS1025A, a member of the pyrrolizidinone family that acts as a strong telomerase inhibitor and displays potent antibacterial and antitumor properties. These compounds share a hemiaminal-containing pyrrolizidinone core fused with a gamma-lactone, giving a furopyrrolizidine that is connected to a decalin fragment. The polyketide synthase module (PKS) of the PKS-NRPS ucsA is responsible for the synthesis of the polyketide backbone via the condensation of an acetyl-CoA starter unit with 6 malonyl-CoA units. The downstream nonribosomal peptide synthetase (NRPS) module then amidates the carboxyl end of the polyketide with a 2S,3S-methylproline derived from L-isoleucine by the 2-oxoglutarate-dependent dioxygenase ucsF which converts L-isoleucine to (4S,5S)-4-methylpyrroline-5-carboxylate that is further converted to 2S,3S-methylproline by the pyrroline-5-carboxylate reductase ucsG. Reductive release of the completed aminoacyl polyketide from the assembly line can form the 3-pyrrolin-2-one structure via an intramolecular Knoevenagel reaction. Because ucsA lacks a designated enoylreductase (ER) domain, the required activity is provided the enoyl reductase ucsL. This keto acyclic precursor is the substrate of the Diels-Alderase ucsH, that catalyzes the Diels-Alder cycloaddition. Oxidation of the 3S-methyl group to a carboxylate by the cytochrome P450 monooxygenase ucsK allows an oxa-Michael cyclization that might involve the reductase/dehydrogenase ucsI and which furnishes the furopyrrolizidine. The oxidase ucsJ likely plays a critical role in stereoselective reduction of the C5-C6 double bond to afford the required R-configured carboxylate group. Further enolization and oxidation at C5 by an unidentified enzyme affords the last intermediate that can undergo oxa-Michael cyclization to yield UCS1025A. This chain is Methyltransferase ucsB, found in Acremonium sp.